The sequence spans 203 residues: Translation initiation factor IF-3 (203 aa).

Residues Glu-172–Glu-182 are compositionally biased toward basic and acidic residues. The interval Glu-172–Asp-203 is disordered.

This sequence belongs to the IF-3 family. As to quaternary structure, monomer.

It localises to the cytoplasm. Functionally, IF-3 binds to the 30S ribosomal subunit and shifts the equilibrium between 70S ribosomes and their 50S and 30S subunits in favor of the free subunits, thus enhancing the availability of 30S subunits on which protein synthesis initiation begins. This is Translation initiation factor IF-3 from Helicobacter pylori (strain J99 / ATCC 700824) (Campylobacter pylori J99).